The sequence spans 367 residues: Chorismate synthase (367 aa).

Residues 39–60 form a disordered region; it reads EEFSHDLQRRASGKSRHTSARR. Residues Arg48 and Arg54 each contribute to the NADP(+) site. Residues 125–127, 238–239, Gly278, 293–297, and Arg319 contribute to the FMN site; these read RSS, NA, and KPTSS.

Belongs to the chorismate synthase family. Homotetramer. FMNH2 serves as cofactor.

It carries out the reaction 5-O-(1-carboxyvinyl)-3-phosphoshikimate = chorismate + phosphate. The protein operates within metabolic intermediate biosynthesis; chorismate biosynthesis; chorismate from D-erythrose 4-phosphate and phosphoenolpyruvate: step 7/7. Its function is as follows. Catalyzes the anti-1,4-elimination of the C-3 phosphate and the C-6 proR hydrogen from 5-enolpyruvylshikimate-3-phosphate (EPSP) to yield chorismate, which is the branch point compound that serves as the starting substrate for the three terminal pathways of aromatic amino acid biosynthesis. This reaction introduces a second double bond into the aromatic ring system. This is Chorismate synthase from Xanthomonas oryzae pv. oryzae (strain MAFF 311018).